The chain runs to 488 residues: Glutamate--tRNA ligase (488 aa).

Residues 11–21 (PSPTGQIHIGN) carry the 'HIGH' region motif. Zn(2+)-binding residues include Cys-108, Cys-110, Cys-135, and Asp-137. The 'KMSKS' region signature appears at 252–256 (KLSKR). Lys-255 serves as a coordination point for ATP.

This sequence belongs to the class-I aminoacyl-tRNA synthetase family. Glutamate--tRNA ligase type 1 subfamily. Monomer. The cofactor is Zn(2+).

The protein localises to the cytoplasm. It catalyses the reaction tRNA(Glu) + L-glutamate + ATP = L-glutamyl-tRNA(Glu) + AMP + diphosphate. Catalyzes the attachment of glutamate to tRNA(Glu) in a two-step reaction: glutamate is first activated by ATP to form Glu-AMP and then transferred to the acceptor end of tRNA(Glu). This chain is Glutamate--tRNA ligase, found in Natranaerobius thermophilus (strain ATCC BAA-1301 / DSM 18059 / JW/NM-WN-LF).